Consider the following 98-residue polypeptide: NADH-ubiquinone oxidoreductase chain 4L (98 aa).

3 helical membrane passes run 1-21 (MSMV…GLLI), 30-50 (LLCL…TILI), and 61-81 (IILL…LVMI).

This sequence belongs to the complex I subunit 4L family. Core subunit of respiratory chain NADH dehydrogenase (Complex I) which is composed of 45 different subunits.

It localises to the mitochondrion inner membrane. The enzyme catalyses a ubiquinone + NADH + 5 H(+)(in) = a ubiquinol + NAD(+) + 4 H(+)(out). Its function is as follows. Core subunit of the mitochondrial membrane respiratory chain NADH dehydrogenase (Complex I) which catalyzes electron transfer from NADH through the respiratory chain, using ubiquinone as an electron acceptor. Part of the enzyme membrane arm which is embedded in the lipid bilayer and involved in proton translocation. The protein is NADH-ubiquinone oxidoreductase chain 4L (MT-ND4L) of Neovison vison (American mink).